The following is a 302-amino-acid chain: ATP synthase gamma chain (302 aa).

The protein belongs to the ATPase gamma chain family. As to quaternary structure, F-type ATPases have 2 components, CF(1) - the catalytic core - and CF(0) - the membrane proton channel. CF(1) has five subunits: alpha(3), beta(3), gamma(1), delta(1), epsilon(1). CF(0) has three main subunits: a, b and c.

It is found in the cell membrane. In terms of biological role, produces ATP from ADP in the presence of a proton gradient across the membrane. The gamma chain is believed to be important in regulating ATPase activity and the flow of protons through the CF(0) complex. This chain is ATP synthase gamma chain, found in Kineococcus radiotolerans (strain ATCC BAA-149 / DSM 14245 / SRS30216).